Reading from the N-terminus, the 199-residue chain is DnaJ homolog subfamily C member 5B (199 aa).

A phosphoserine mark is found at Ser-14 and Ser-16. Positions 19 to 84 constitute a J domain; the sequence is ALYEILGLQK…SKRNIYDKYG (66 aa).

In terms of assembly, interacts with the chaperone complex consisting of HSC70 and SGTA. Palmitoylated.

Its subcellular location is the membrane. The polypeptide is DnaJ homolog subfamily C member 5B (DNAJC5B) (Ailuropoda melanoleuca (Giant panda)).